The primary structure comprises 80 residues: Exodeoxyribonuclease 7 small subunit (80 aa).

It belongs to the XseB family. As to quaternary structure, heterooligomer composed of large and small subunits.

It localises to the cytoplasm. The enzyme catalyses Exonucleolytic cleavage in either 5'- to 3'- or 3'- to 5'-direction to yield nucleoside 5'-phosphates.. In terms of biological role, bidirectionally degrades single-stranded DNA into large acid-insoluble oligonucleotides, which are then degraded further into small acid-soluble oligonucleotides. The polypeptide is Exodeoxyribonuclease 7 small subunit (Marinomonas sp. (strain MWYL1)).